The sequence spans 62 residues: Large ribosomal subunit protein bL28 (62 aa).

It belongs to the bacterial ribosomal protein bL28 family.

The sequence is that of Large ribosomal subunit protein bL28 from Moorella thermoacetica (strain ATCC 39073 / JCM 9320).